We begin with the raw amino-acid sequence, 317 residues long: Ribosomal RNA small subunit methyltransferase A (317 aa).

6 residues coordinate S-adenosyl-L-methionine: Asn-37, Val-39, Gly-64, Glu-85, Asp-115, and Asn-134. Positions 293–317 (GGSDEATSTGRDARAPDISGHASAS) are disordered.

The protein belongs to the class I-like SAM-binding methyltransferase superfamily. rRNA adenine N(6)-methyltransferase family. RsmA subfamily.

It is found in the cytoplasm. The catalysed reaction is adenosine(1518)/adenosine(1519) in 16S rRNA + 4 S-adenosyl-L-methionine = N(6)-dimethyladenosine(1518)/N(6)-dimethyladenosine(1519) in 16S rRNA + 4 S-adenosyl-L-homocysteine + 4 H(+). Functionally, specifically dimethylates two adjacent adenosines (A1518 and A1519) in the loop of a conserved hairpin near the 3'-end of 16S rRNA in the 30S particle. May play a critical role in biogenesis of 30S subunits. The protein is Ribosomal RNA small subunit methyltransferase A of Mycobacterium bovis (strain BCG / Tokyo 172 / ATCC 35737 / TMC 1019).